The chain runs to 356 residues: 4-hydroxy-3-methylbut-2-en-1-yl diphosphate synthase (flavodoxin) (356 aa).

Residues Cys-262, Cys-265, Cys-297, and Glu-304 each contribute to the [4Fe-4S] cluster site.

Belongs to the IspG family. [4Fe-4S] cluster is required as a cofactor.

It catalyses the reaction (2E)-4-hydroxy-3-methylbut-2-enyl diphosphate + oxidized [flavodoxin] + H2O + 2 H(+) = 2-C-methyl-D-erythritol 2,4-cyclic diphosphate + reduced [flavodoxin]. It participates in isoprenoid biosynthesis; isopentenyl diphosphate biosynthesis via DXP pathway; isopentenyl diphosphate from 1-deoxy-D-xylulose 5-phosphate: step 5/6. Converts 2C-methyl-D-erythritol 2,4-cyclodiphosphate (ME-2,4cPP) into 1-hydroxy-2-methyl-2-(E)-butenyl 4-diphosphate. The sequence is that of 4-hydroxy-3-methylbut-2-en-1-yl diphosphate synthase (flavodoxin) from Campylobacter fetus subsp. fetus (strain 82-40).